Reading from the N-terminus, the 364-residue chain is Probable dual-specificity RNA methyltransferase RlmN (364 aa).

Glutamate 107 acts as the Proton acceptor in catalysis. In terms of domain architecture, Radical SAM core spans 113 to 346; that stretch reads HDYGNSVCVT…ATIRREQGSD (234 aa). Cysteines 120 and 351 form a disulfide. [4Fe-4S] cluster is bound by residues cysteine 127, cysteine 131, and cysteine 134. S-adenosyl-L-methionine contacts are provided by residues 177–178, serine 209, 232–234, and asparagine 308; these read GE and SLH. Catalysis depends on cysteine 351, which acts as the S-methylcysteine intermediate.

The protein belongs to the radical SAM superfamily. RlmN family. [4Fe-4S] cluster serves as cofactor.

The protein resides in the cytoplasm. The enzyme catalyses adenosine(2503) in 23S rRNA + 2 reduced [2Fe-2S]-[ferredoxin] + 2 S-adenosyl-L-methionine = 2-methyladenosine(2503) in 23S rRNA + 5'-deoxyadenosine + L-methionine + 2 oxidized [2Fe-2S]-[ferredoxin] + S-adenosyl-L-homocysteine. It carries out the reaction adenosine(37) in tRNA + 2 reduced [2Fe-2S]-[ferredoxin] + 2 S-adenosyl-L-methionine = 2-methyladenosine(37) in tRNA + 5'-deoxyadenosine + L-methionine + 2 oxidized [2Fe-2S]-[ferredoxin] + S-adenosyl-L-homocysteine. Functionally, specifically methylates position 2 of adenine 2503 in 23S rRNA and position 2 of adenine 37 in tRNAs. Confers resistance to some classes of antibiotics. This is Probable dual-specificity RNA methyltransferase RlmN from Staphylococcus aureus (strain Mu3 / ATCC 700698).